Reading from the N-terminus, the 171-residue chain is Probable chorismate pyruvate-lyase (171 aa).

Substrate-binding residues include Met-36, Arg-78, Leu-116, and Glu-157.

Belongs to the UbiC family.

It localises to the cytoplasm. The enzyme catalyses chorismate = 4-hydroxybenzoate + pyruvate. The protein operates within cofactor biosynthesis; ubiquinone biosynthesis. Its function is as follows. Removes the pyruvyl group from chorismate, with concomitant aromatization of the ring, to provide 4-hydroxybenzoate (4HB) for the ubiquinone pathway. In Bartonella bacilliformis (strain ATCC 35685 / KC583 / Herrer 020/F12,63), this protein is Probable chorismate pyruvate-lyase.